Reading from the N-terminus, the 244-residue chain is tRNA (guanine-N(7)-)-methyltransferase (244 aa).

The segment covering Met-1–Gln-10 has biased composition (polar residues). The disordered stretch occupies residues Met-1–Arg-20. S-adenosyl-L-methionine contacts are provided by Glu-74, Glu-99, Asp-126, and Asp-149. The active site involves Asp-149. Substrate contacts are provided by residues Lys-153, Asp-185, and Thr-222–Glu-225.

This sequence belongs to the class I-like SAM-binding methyltransferase superfamily. TrmB family.

The enzyme catalyses guanosine(46) in tRNA + S-adenosyl-L-methionine = N(7)-methylguanosine(46) in tRNA + S-adenosyl-L-homocysteine. It functions in the pathway tRNA modification; N(7)-methylguanine-tRNA biosynthesis. In terms of biological role, catalyzes the formation of N(7)-methylguanine at position 46 (m7G46) in tRNA. The polypeptide is tRNA (guanine-N(7)-)-methyltransferase (Pseudomonas aeruginosa (strain ATCC 15692 / DSM 22644 / CIP 104116 / JCM 14847 / LMG 12228 / 1C / PRS 101 / PAO1)).